Here is a 101-residue protein sequence, read N- to C-terminus: Putative septation protein SpoVG (101 aa).

The segment at 82–101 (ELKKGGAAPARATGTDPHED) is disordered.

This sequence belongs to the SpoVG family.

Could be involved in septation. This is Putative septation protein SpoVG from Anaeromyxobacter dehalogenans (strain 2CP-1 / ATCC BAA-258).